Consider the following 1046-residue polypeptide: UDP-N-acetylglucosamine--peptide N-acetylglucosaminyltransferase 110 kDa subunit (1046 aa).

The residue at position 2 (A2) is an N-acetylalanine. 2 positions are modified to phosphoserine; by GSK3-beta; alternate: S3 and S4. Residues S3 and S4 are each glycosylated (O-linked (GlcNAc) serine; alternate). S20 is subject to Phosphoserine. 12 TPR repeats span residues 21-54, 89-122, 123-156, 157-190, 191-224, 225-258, 259-292, 293-326, 327-360, 361-394, 395-428, and 429-462; these read FQGLAELAHREYQAGDFEAAERHCMQLWRQEPDN, AEAYSNLGNVYKERGQLQEAIEHYRHALRLKPDF, IDGYINLAAALVAAGDMEGAVQAYVSALQYNPDL, YCVRSDLGNLLKALGRLEEAKACYLKAIETQPNF, AVAWSNLGCVFNAQGEIWLAIHHFEKAVTLDPNF, LDAYINLGNVLKEARIFDRAVAAYLRALSLSPNH, AVVHGNLACVYYEQGLIDLAIDTYRRAIELQPHF, PDAYCNLANALKEKGSVAEAEDCYNTALRLCPTH, ADSLNNLANIKREQGNIEEAVRLYRKALEVFPEF, AAAHSNLASVLQQQGKLQEALMHYKEAIRISPTF, ADAYSNMGNTLKEMQDVQGALQCYTRAIQINPAF, and ADAHSNLASIHKDSGNIPEAIASYRTALKLKPDF. Residue S399 is glycosylated (O-linked (GlcNAc) serine; by autocatalysis). A Phosphothreonine modification is found at T454. A TPR 13; truncated repeat occupies 463–473; it reads PDAYCNLAHCL. The DFP motif signature appears at 464 to 466; sequence DAY. Positions 487–503 match the Nuclear localization signal motif; that stretch reads KKLVSIVADQLEKNRLP. The active-site Proton acceptor is H508. Residues Q849, K852, 906–908, 911–914, 930–932, and D935 each bind UDP; these read APK, HVRR, and HTT. The residue at position 989 (Y989) is a Phosphotyrosine. Positions 991–1010 are required for phosphatidylinositol 3,4,5-triphosphate binding; it reads KKIRGKVWKQRISSPLFNTK.

This sequence belongs to the glycosyltransferase 41 family. O-GlcNAc transferase subfamily. As to quaternary structure, monomer; may exist in different oligomerization states in cells. Homotrimer, oligomerizes via TPR repeats 6 and 7. Trimerization is not necessary for activity in vitro, however it increases affinity for UDP-GlcNAc. Component of a THAP1/THAP3-HCFC1-OGT complex. Component of the NSL complex at least composed of MOF/KAT8, KANSL1, KANSL2, KANSL3, MCRS1, PHF20, OGT1/OGT, WDR5 and HCFC1. Found in a complex with KIF5B, RHOT1, RHOT2 and TRAK1. Found in a complex composed of at least SINHCAF, SIN3A, HDAC1, SAP30, RBBP4, OGT and TET1. Component of a complex composed of KMT2E/MLL5, OGT and USP7; the complex stabilizes KMT2E/MLL5, preventing KMT2E/MLL5 ubiquitination and proteasomal-mediated degradation. Interacts (via TPRs 1-6) with SIN3A; the interaction mediates transcriptional repression in parallel with histone deacetylase. Interacts (via TPR 5-6) with TET1, TET2 and TET3. Interacts (via TPR repeats 6 and 7) with ATXN10. Interacts with NSD2. Interacts with PROSER1; this interaction mediates TET2 O-GlcNAcylation and stability by promoting the interaction between OGT and TET2. Post-translationally, ubiquitinated by the SCF(FBXO31) complex, leading to its proteasomal degradation. In terms of processing, phosphorylation on Ser-3 or Ser-4 by GSK3-beta positively regulates its activity. Phosphorylation at Thr-454 by AMPK promotes nuclear localization. Glycosylated via autocatalysis; O-GlcNAcylation at Ser-399 promotes nuclear localization.

It is found in the nucleus. The protein localises to the cytoplasm. It carries out the reaction L-seryl-[protein] + UDP-N-acetyl-alpha-D-glucosamine = 3-O-(N-acetyl-beta-D-glucosaminyl)-L-seryl-[protein] + UDP + H(+). The enzyme catalyses L-threonyl-[protein] + UDP-N-acetyl-alpha-D-glucosamine = 3-O-(N-acetyl-beta-D-glucosaminyl)-L-threonyl-[protein] + UDP + H(+). Its pathway is protein modification; protein glycosylation. With respect to regulation, subject to product inhibition by UDP. Functionally, catalyzes the transfer of a single N-acetylglucosamine from UDP-GlcNAc to a serine or threonine residue in cytoplasmic and nuclear proteins resulting in their modification with a beta-linked N-acetylglucosamine (O-GlcNAc). Glycosylates a large and diverse number of proteins including histone H2B, AKT1, AMPK, ATG4B, CAPRIN1, EZH2, FNIP1, GSDMD, KRT7, LMNA, LMNB1, LMNB2, RPTOR, HOXA1, PFKL, KMT2E/MLL5, MAPT/TAU, TET2, RBL2, RET, NOD2 and HCFC1. Can regulate their cellular processes via cross-talk between glycosylation and phosphorylation or by affecting proteolytic processing. Involved in insulin resistance in muscle and adipocyte cells via glycosylating insulin signaling components and inhibiting the 'Thr-308' phosphorylation of AKT1, enhancing IRS1 phosphorylation and attenuating insulin signaling. Involved in glycolysis regulation by mediating glycosylation of 6-phosphofructokinase PFKL, inhibiting its activity. Plays a key role in chromatin structure by mediating O-GlcNAcylation of 'Ser-112' of histone H2B: recruited to CpG-rich transcription start sites of active genes via its interaction with TET proteins (TET1, TET2 or TET3). As part of the NSL complex indirectly involved in acetylation of nucleosomal histone H4 on several lysine residues. O-GlcNAcylation of 'Ser-75' of EZH2 increases its stability, and facilitating the formation of H3K27me3 by the PRC2/EED-EZH2 complex. Stabilizes KMT2E/MLL5 by mediating its glycosylation, thereby preventing KMT2E/MLL5 ubiquitination. Regulates circadian oscillation of the clock genes and glucose homeostasis in the liver. Stabilizes clock proteins BMAL1 and CLOCK through O-glycosylation, which prevents their ubiquitination and subsequent degradation. Promotes the CLOCK-BMAL1-mediated transcription of genes in the negative loop of the circadian clock such as PER1/2 and CRY1/2. O-glycosylates HCFC1 and regulates its proteolytic processing and transcriptional activity. Component of a THAP1/THAP3-HCFC1-OGT complex that is required for the regulation of the transcriptional activity of RRM1. Regulates mitochondrial motility in neurons by mediating glycosylation of TRAK1. Promotes autophagy by mediating O-glycosylation of ATG4B. Acts as a regulator of mTORC1 signaling by mediating O-glycosylation of RPTOR and FNIP1: O-GlcNAcylation of RPTOR in response to glucose sufficiency promotes activation of the mTORC1 complex. The protein is UDP-N-acetylglucosamine--peptide N-acetylglucosaminyltransferase 110 kDa subunit (OGT) of Sus scrofa (Pig).